Here is a 629-residue protein sequence, read N- to C-terminus: MDFPKSFDVIVIGGGHAGTEAALAAARMGSQTLLLTHNIETLGQMSCNPAIGGIGKSHLVKEVDALGGAMALATDRAGIQFRVLNSRKGPAVRATRAQADRALYKAAIREILENQPNLTIFQQAADDLIMQGDHVAGVVTQMGLRFHSKTVVLTTGTFLGGVIHIGLENHSGGRAGDPPSIALAKRLREMPFRVGRLKTGTPPRIDARSVDFSVMEAQPGDTPIPVMSFMGSVDLHPHQVNCFITRTNERTHEIIRGGMDRSPMYTGVIEGVGPRYCPSIEDKVNRFSDKDSHQVFIEPEGLSTHELYPNGISTSLPFDVQLQLVHSIQGMENAHITRPGYAIEYDFFNPQDLKHSLETKFVGSLFFAGQINGTTGYEEAAAQGLLAGMNAALRAQEKEAWSPRRDEAYIGVLVDDLITMGTREPYRMFTSRAEYRLLLREDNADLRLTEKGRELGMIDDERWRVFCEKREAIAREQQRLKSIWIQPATEKARKAAELLETELTREYSLHDLLKRPEMTWEKLSLLDADVAATPYEVAEQLEIQVKYAGYIDRQQEEIERLRRNENMALPADLDYSGIQGLSNEIKQKLTEVRPETLAQASRIPGVTPAAVSLLLVHLKKRGSLQRKSA.

13–18 (GGGHAG) contacts FAD. 273 to 287 (GPRYCPSIEDKVNRF) serves as a coordination point for NAD(+).

It belongs to the MnmG family. In terms of assembly, homodimer. Heterotetramer of two MnmE and two MnmG subunits. The cofactor is FAD.

Its subcellular location is the cytoplasm. Functionally, NAD-binding protein involved in the addition of a carboxymethylaminomethyl (cmnm) group at the wobble position (U34) of certain tRNAs, forming tRNA-cmnm(5)s(2)U34. This chain is tRNA uridine 5-carboxymethylaminomethyl modification enzyme MnmG, found in Hahella chejuensis (strain KCTC 2396).